A 396-amino-acid polypeptide reads, in one-letter code: uncharacterized protein (396 aa).

12 consecutive transmembrane segments (helical) span residues 12 to 32, 48 to 68, 78 to 98, 106 to 126, 138 to 158, 165 to 185, 209 to 229, 242 to 262, 271 to 291, 297 to 317, 338 to 358, and 362 to 382; these read LLAL…SVGL, GLTV…LTSL, LLWI…ASSI, VISA…AADI, IMFT…TFIG, FAFM…GILV, LLLL…VFTY, AGTV…GNMI, PIAA…VLTF, AAGL…VPGL, AMNI…GGVI, and IGLI…VILT.

This sequence belongs to the major facilitator superfamily.

It localises to the cell membrane. This is an uncharacterized protein from Bacillus subtilis (strain 168).